A 109-amino-acid polypeptide reads, in one-letter code: Nucleoid-associated protein PC1_1077 (109 aa).

Belongs to the YbaB/EbfC family. As to quaternary structure, homodimer.

The protein localises to the cytoplasm. It is found in the nucleoid. In terms of biological role, binds to DNA and alters its conformation. May be involved in regulation of gene expression, nucleoid organization and DNA protection. This Pectobacterium carotovorum subsp. carotovorum (strain PC1) protein is Nucleoid-associated protein PC1_1077.